We begin with the raw amino-acid sequence, 86 residues long: Dolichyl-diphosphooligosaccharide--protein glycosyltransferase subunit OST5 (86 aa).

The Lumenal segment spans residues 2–27 (TYEQLYKEFHSSKSFQPFIHLDTQPK). Residues 28-48 (FAICGLIVTLAVLSSALFAVG) form a helical membrane-spanning segment. Over 49–56 (SKSSYIKK) the chain is Cytoplasmic. Residues 57-77 (LFFYTILSVIGSLFAGLTTVF) form a helical membrane-spanning segment. Over 78–86 (ASNSFGVYV) the chain is Lumenal.

The protein belongs to the OST5 family. In terms of assembly, component of the oligosaccharyltransferase (OST) complex, which appears to exist in two assemblies comprising OST1, OST2, OST4, OST5, STT3, SWP1, WPB1, and either OST3 or OST6. OST assembly occurs through the formation of 3 subcomplexes. Subcomplex 1 contains OST1 and OST5, subcomplex 2 contains STT3, OST3, and OST4, and subcomplex 3 contains OST2, WBP1, and SWP1.

It localises to the endoplasmic reticulum membrane. It functions in the pathway protein modification; protein glycosylation. Functionally, subunit of the oligosaccharyl transferase (OST) complex that catalyzes the initial transfer of a defined glycan (Glc(3)Man(9)GlcNAc(2) in eukaryotes) from the lipid carrier dolichol-pyrophosphate to an asparagine residue within an Asn-X-Ser/Thr consensus motif in nascent polypeptide chains, the first step in protein N-glycosylation. N-glycosylation occurs cotranslationally and the complex associates with the Sec61 complex at the channel-forming translocon complex that mediates protein translocation across the endoplasmic reticulum (ER). All subunits are required for a maximal enzyme activity. The protein is Dolichyl-diphosphooligosaccharide--protein glycosyltransferase subunit OST5 (OST5) of Saccharomyces cerevisiae (strain ATCC 204508 / S288c) (Baker's yeast).